We begin with the raw amino-acid sequence, 224 residues long: Heme response regulator HssR (224 aa).

Residues 3–116 (NCLIVDDDKK…ELLFRIKAVL (114 aa)) enclose the Response regulatory domain. The residue at position 52 (Asp52) is a 4-aspartylphosphate. Residues 124–222 (DNELQLGNLI…VRGQGYRVDQ (99 aa)) constitute a DNA-binding region (ompR/PhoB-type).

Phosphorylated by HssS.

Its subcellular location is the cytoplasm. Functionally, member of the two-component regulatory system HssS/HssR involved in intracellular heme homeostasis and tempering of staphylococcal virulence. Phosphorylated HssR binds to a direct repeat sequence within hrtAB promoter and activates the expression of hrtAB, an efflux pump, in response to extracellular heme, hemin, hemoglobin or blood. In Staphylococcus epidermidis (strain ATCC 35984 / DSM 28319 / BCRC 17069 / CCUG 31568 / BM 3577 / RP62A), this protein is Heme response regulator HssR (hssR).